The following is a 428-amino-acid chain: GTPase Obg (428 aa).

The 158-residue stretch at 1–158 folds into the Obg domain; the sequence is MFIDIAKVFI…LSIVLELKLL (158 aa). The OBG-type G domain maps to 159–331; the sequence is ADVGLLGFPN…VIKEAARMLK (173 aa). GTP-binding positions include 165–172, 190–194, 212–215, 282–285, and 312–314; these read GFPNVGKS, FTTLK, DIPG, NKSD, and SAA. Mg(2+)-binding residues include serine 172 and threonine 192. One can recognise an OCT domain in the interval 345-428; the sequence is MYIPEEKKFT…LNDFEFEYLL (84 aa).

This sequence belongs to the TRAFAC class OBG-HflX-like GTPase superfamily. OBG GTPase family. In terms of assembly, monomer. Mg(2+) is required as a cofactor.

It localises to the cytoplasm. Its function is as follows. An essential GTPase which binds GTP, GDP and possibly (p)ppGpp with moderate affinity, with high nucleotide exchange rates and a fairly low GTP hydrolysis rate. Plays a role in control of the cell cycle, stress response, ribosome biogenesis and in those bacteria that undergo differentiation, in morphogenesis control. The sequence is that of GTPase Obg from Clostridium botulinum (strain Alaska E43 / Type E3).